The sequence spans 626 residues: Carnitine O-acetyltransferase (626 aa).

K93 carries the post-translational modification N6-succinyllysine. N6-acetyllysine; alternate is present on K261. N6-succinyllysine; alternate is present on K261. Residue K268 is modified to N6-acetyllysine. H343 serves as the catalytic Proton acceptor. Residues K419 and 423–430 (KSEKLSPD) contribute to the CoA site. (R)-carnitine contacts are provided by Y452 and S454. S456 is a binding site for CoA. T465 is a (R)-carnitine binding site. CoA is bound by residues R504 and Q555. A Microbody targeting signal motif is present at residues 624–626 (AKL).

The protein belongs to the carnitine/choline acetyltransferase family. Monomer. As to expression, mostly in skeletal muscle, less in heart, liver and pancreas, only weakly detectable in brain, placenta, lung and kidney.

Its subcellular location is the endoplasmic reticulum. The protein resides in the peroxisome. The protein localises to the mitochondrion inner membrane. It localises to the mitochondrion. It catalyses the reaction (R)-carnitine + acetyl-CoA = O-acetyl-(R)-carnitine + CoA. The enzyme catalyses propanoyl-CoA + (R)-carnitine = O-propanoyl-(R)-carnitine + CoA. The catalysed reaction is butanoyl-CoA + (R)-carnitine = O-butanoyl-(R)-carnitine + CoA. It carries out the reaction hexanoyl-CoA + (R)-carnitine = O-hexanoyl-(R)-carnitine + CoA. It catalyses the reaction octanoyl-CoA + (R)-carnitine = O-octanoyl-(R)-carnitine + CoA. The enzyme catalyses decanoyl-CoA + (R)-carnitine = O-decanoyl-(R)-carnitine + CoA. The catalysed reaction is 3-methylbutanoyl-CoA + (R)-carnitine = O-3-methylbutanoyl-(R)-carnitine + CoA. It carries out the reaction 2-methylpropanoyl-CoA + (R)-carnitine = O-isobutanoyl-(R)-carnitine + CoA. It catalyses the reaction 2-methylbutanoyl-CoA + (R)-carnitine = O-2-methylbutanoyl-(R)-carnitine + CoA. The enzyme catalyses acetoacetyl-CoA + (R)-carnitine = O-3-oxobutanoyl-(R)-carnitine + CoA. The catalysed reaction is 3-hydroxybutanoyl-CoA + (R)-carnitine = O-3-hydroxybutanoyl-(R)-carnitine + CoA. It carries out the reaction 4,8-dimethylnonanoyl-CoA + (R)-carnitine = O-4,8-dimethylnonanoyl-(R)-carnitine + CoA. It catalyses the reaction 2,6-dimethylheptanoyl-CoA + (R)-carnitine = O-2,6-dimethylheptanoyl-(R)-carnitine + CoA. Functionally, catalyzes the reversible transfer of acyl groups from carnitine to coenzyme A (CoA) and regulates the acyl-CoA/CoA ratio. Also plays a crucial role in the transport of fatty acids for beta-oxidation. Responsible for the synthesis of short- and branched-chain acylcarnitines. Active towards some branched-chain amino acid oxidation pathway (BCAAO) intermediates. Trans-2-enoyl-CoAs and 2-methylacyl-CoAs are poor substrates. The sequence is that of Carnitine O-acetyltransferase from Homo sapiens (Human).